Here is a 682-residue protein sequence, read N- to C-terminus: Potassium-transporting ATPase ATP-binding subunit (682 aa).

Helical transmembrane passes span 35–55 (VMFI…AMAG), 62–82 (ATFT…ANFA), 219–239 (IALT…TATI), and 254–274 (VLVA…LSAI). Asp307 acts as the 4-aspartylphosphate intermediate in catalysis. ATP contacts are provided by residues Asp344, Glu348, 377-384 (FTAQTRMS), and Lys395. Residues Asp518 and Asp522 each coordinate Mg(2+). Transmembrane regions (helical) follow at residues 588 to 608 (FAII…LNVM), 616 to 636 (AILS…PLAL), and 656 to 676 (IYGL…DLLL).

It belongs to the cation transport ATPase (P-type) (TC 3.A.3) family. Type IA subfamily. As to quaternary structure, the system is composed of three essential subunits: KdpA, KdpB and KdpC.

It localises to the cell inner membrane. The enzyme catalyses K(+)(out) + ATP + H2O = K(+)(in) + ADP + phosphate + H(+). In terms of biological role, part of the high-affinity ATP-driven potassium transport (or Kdp) system, which catalyzes the hydrolysis of ATP coupled with the electrogenic transport of potassium into the cytoplasm. This subunit is responsible for energy coupling to the transport system and for the release of the potassium ions to the cytoplasm. The chain is Potassium-transporting ATPase ATP-binding subunit from Klebsiella pneumoniae (strain 342).